The chain runs to 273 residues: Salivary glue protein Sgs-3 (273 aa).

A signal peptide spans 1 to 23; that stretch reads MKLTIAISLASILLLSVAHVAQG. A compositionally biased stretch (low complexity) spans 47–57; it reads TTTTTTTTCAP. A disordered region spans residues 47–225; the sequence is TTTTTTTTCA…TPKPTNKPGC (179 aa). Residues 58–67 are compositionally biased toward pro residues; that stretch reads PTRPPPPPCT. The segment covering 83–225 has biased composition (low complexity); that stretch reads RRTTTTTRQT…TPKPTNKPGC (143 aa).

This chain is Salivary glue protein Sgs-3 (Sgs3), found in Drosophila yakuba (Fruit fly).